Reading from the N-terminus, the 91-residue chain is UPF0298 protein M28_Spy0318 (91 aa).

This sequence belongs to the UPF0298 family.

It localises to the cytoplasm. The sequence is that of UPF0298 protein M28_Spy0318 from Streptococcus pyogenes serotype M28 (strain MGAS6180).